Reading from the N-terminus, the 377-residue chain is G-protein coupled receptor 54 (377 aa).

Residues 1-49 are Extracellular-facing; sequence MYSSEELWNSTEQVWINGSGTNFSLGRHEDDEEEEGDKHPFFTDAWLVP. N-linked (GlcNAc...) asparagine glycosylation is found at N9, N17, and N22. Residues 50 to 70 form a helical membrane-spanning segment; that stretch reads LFFSLIMLVGLVGNSLVIYVI. The Cytoplasmic portion of the chain corresponds to 71–91; the sequence is SKHRQMRTATNFYIANLAATD. The helical transmembrane segment at 92–112 threads the bilayer; it reads IIFLVCCVPFTATLYPLPGWI. Residues 113 to 119 are Extracellular-facing; it reads FGNFMCK. C118 and C198 are disulfide-bonded. Residues 120–140 traverse the membrane as a helical segment; that stretch reads FVAFLQQVTVQATCITLTAMS. Residues 141 to 160 are Cytoplasmic-facing; that stretch reads GDRCYVTVYPLKSLRHRTPK. A helical membrane pass occupies residues 161–181; it reads VAMIVSICIWIGSFVLSTPIL. The Extracellular portion of the chain corresponds to 182-209; sequence MYQRIEEGYWYGPRQYCMERFPSKTHER. The helical transmembrane segment at 210-230 threads the bilayer; sequence AFILYQFIAAYLLPVLTISFC. Over 231–269 the chain is Cytoplasmic; that stretch reads YTLMVKRVGQPTVEPVDNNYQVNLLSERTISIRSKVSKM. Residues 270 to 290 form a helical membrane-spanning segment; it reads VVVIVLLFAICWGPIQIFVLF. Residues 291-305 are Extracellular-facing; sequence QSFYPNYQPNYATYK. A helical membrane pass occupies residues 306 to 328; the sequence is IKTWANCMSYANSSVNPIVYGFM. Residues 329-377 are Cytoplasmic-facing; sequence GASFQKSFRKTFPFLFKHKVRDSSMASRTANAEIKFVAAEEGNNNNAVN.

It belongs to the G-protein coupled receptor 1 family. Expressed in a significantly high percentage (45-60%) of mature GnRH1, GnRH2, and GnRH3 neurons and in immature GnRH3 neurons, which had migrated to the vicinity of their final locations in the brain. Only 5% of immature GnRH1 and GnRH2 neurons have receptor transcripts.

It is found in the cell membrane. In terms of biological role, receptor speculated to be essential for sexual development. May regulate gonadotropin-releasing hormone (GnRH) secretion. The receptor expression could be a 'stop signal' for GnRH1, GnRH2, and GnRH3 neuronal migration, leading to suppression of cell growth and modulation of GnRH secretion, which is important for normal sexual development. The protein is G-protein coupled receptor 54 (gpr54) of Oreochromis niloticus (Nile tilapia).